The chain runs to 122 residues: UPF0102 protein VV1_0590 (122 aa).

It belongs to the UPF0102 family.

The chain is UPF0102 protein VV1_0590 from Vibrio vulnificus (strain CMCP6).